Reading from the N-terminus, the 113-residue chain is Small ribosomal subunit protein uS17 (113 aa).

Belongs to the universal ribosomal protein uS17 family. Part of the 30S ribosomal subunit.

In terms of biological role, one of the primary rRNA binding proteins, it binds specifically to the 5'-end of 16S ribosomal RNA. The protein is Small ribosomal subunit protein uS17 of Sulfurisphaera tokodaii (strain DSM 16993 / JCM 10545 / NBRC 100140 / 7) (Sulfolobus tokodaii).